The sequence spans 190 residues: Biphenyl-2,3-diol 1,2-dioxygenase 2 (190 aa).

The region spanning Lys-6–Asp-124 is the VOC domain. 3 residues coordinate Fe cation: His-9, His-72, and Glu-120.

Belongs to the extradiol ring-cleavage dioxygenase family. As to quaternary structure, homohexamer. Fe(2+) serves as cofactor.

It catalyses the reaction biphenyl-2,3-diol + O2 = 2-hydroxy-6-oxo-6-phenylhexa-2,4-dienoate + H(+). The protein operates within xenobiotic degradation; biphenyl degradation; 2-hydroxy-2,4-pentadienoate and benzoate from biphenyl: step 3/4. The polypeptide is Biphenyl-2,3-diol 1,2-dioxygenase 2 (bphC2) (Rhodococcus globerulus).